The following is a 318-amino-acid chain: MALKTLRIGTRASQLALWQANWVKSELEKRYPGLEVSLLKIKTIGDKILDVPLAQVGGKGLFVKEIEEAMLRGDIDIAVHSMKDVPTEFPEGLGLHCITEREDPRDAVISRGIKFADLPKGAKIGTSALRRQAQLLKIRPDMEMVIIRGNVETRINKLEAENLDAVILAAAGLKRLGFTDKVAEYLPTDLSIPAIGQGALGIECRLDNEEVKSAIDFFNHPATAYAVRAERALLWRCEGGCQVPIAAFGEVEGDQLKLTGFIASVDGKTSVKGSVSGPAEECEKLGITLAEQLLKDGGHEILAEVYQREVSREKEIPV.

Cys-241 carries the post-translational modification S-(dipyrrolylmethanemethyl)cysteine.

This sequence belongs to the HMBS family. In terms of assembly, monomer. Dipyrromethane serves as cofactor.

The catalysed reaction is 4 porphobilinogen + H2O = hydroxymethylbilane + 4 NH4(+). Its pathway is porphyrin-containing compound metabolism; protoporphyrin-IX biosynthesis; coproporphyrinogen-III from 5-aminolevulinate: step 2/4. Tetrapolymerization of the monopyrrole PBG into the hydroxymethylbilane pre-uroporphyrinogen in several discrete steps. This Geotalea uraniireducens (strain Rf4) (Geobacter uraniireducens) protein is Porphobilinogen deaminase.